The chain runs to 585 residues: Adenine deaminase (585 aa).

Belongs to the metallo-dependent hydrolases superfamily. Adenine deaminase family. Mn(2+) serves as cofactor.

The enzyme catalyses adenine + H2O + H(+) = hypoxanthine + NH4(+). This Halalkalibacterium halodurans (strain ATCC BAA-125 / DSM 18197 / FERM 7344 / JCM 9153 / C-125) (Bacillus halodurans) protein is Adenine deaminase.